The sequence spans 606 residues: Proton myo-inositol cotransporter hmit-1.1 (606 aa).

Residues 1–20 lie on the Cytoplasmic side of the membrane; the sequence is MVAVAAFSSSGQDKPAHTPK. A helical transmembrane segment spans residues 21–41; the sequence is LGLFVYILAAASVIGGFLFGY. At 42–63 the chain is on the extracellular side; the sequence is DTSVVSAAMLYMPDAPGLKPMD. A helical transmembrane segment spans residues 64 to 84; sequence TVWQEVLVSISPGMAAVGSLM. Over 85 to 96 the chain is Cytoplasmic; the sequence is SGTSSDYIGRRK. The helical transmembrane segment at 97-117 threads the bilayer; sequence VILGASAIFTIGALVCAASVN. A topological domain (extracellular) is located at residue K118. A helical membrane pass occupies residues 119-139; the sequence is IMLLVGRVLLGIAIGFASMIV. The Cytoplasmic segment spans residues 140-152; the sequence is PVYLGETAPTHVR. The helical transmembrane segment at 153-173 threads the bilayer; sequence GMLVAAFALMISFGQVVANIT. Residues 174-188 lie on the Extracellular side of the membrane; sequence GGAFSYIDPYNVGWR. A helical membrane pass occupies residues 189–209; that stretch reads LMFAFAAVPSIIQFVCFMFLP. Residues 210–278 are Cytoplasmic-facing; sequence ETPRWLYENG…RILKTPHVLK (69 aa). A helical transmembrane segment spans residues 279 to 299; it reads ACFIGSMLQAFQQLAGINTIL. Residues 300-317 are Extracellular-facing; it reads YYTADIIRSSGISNNHTT. N-linked (GlcNAc...) asparagine glycosylation is present at N314. The chain crosses the membrane as a helical span at residues 318 to 338; that stretch reads IWISVLLSLCNFIGPFVPMSL. At 339–345 the chain is on the cytoplasmic side; it reads IEKVGRR. The helical transmembrane segment at 346–366 threads the bilayer; the sequence is IIFLFSCGLVVLSLVFIGVAF. The Extracellular segment spans residues 367 to 464; sequence LLVNHDSAAT…EKYYCDTKYT (98 aa). N-linked (GlcNAc...) asparagine glycans are attached at residues N387 and N445. The chain crosses the membrane as a helical span at residues 465-485; the sequence is LLPIIACGVYLLTFSSGFTSL. Residues 486–501 lie on the Cytoplasmic side of the membrane; it reads PWVLNSEFYPMWARST. A helical membrane pass occupies residues 502-522; the sequence is CVAISTTSNWVFNLIIALTYL. Residues 523-531 are Extracellular-facing; the sequence is SLTQVIGKY. The chain crosses the membrane as a helical span at residues 532–552; the sequence is GAFWLYAGLTVIAFIFILFLV. Residues 553–606 are Cytoplasmic-facing; it reads PETKGYSIEEVEMLFMNKKQRREAESRRRETVTEVRSRMNSTVSFGQHNEVHKY.

This sequence belongs to the major facilitator superfamily. Sugar transporter (TC 2.A.1.1) family. In terms of tissue distribution, expressed in the intestine.

Its subcellular location is the cell membrane. The enzyme catalyses myo-inositol(out) + H(+)(out) = myo-inositol(in) + H(+)(in). In terms of biological role, h(+)-myo-inositol cotransporter. Probably by promoting the transport of myo-inositol regulates intracellular osmosis in response to hyperosmotic stress. The polypeptide is Proton myo-inositol cotransporter hmit-1.1 (Caenorhabditis elegans).